A 160-amino-acid polypeptide reads, in one-letter code: Transcriptional repressor NrdR (160 aa).

The segment at 3–34 (CPYCQYEDTQVKDSRPAEEGAVIRRRRVCSVC) is a zinc-finger region. The region spanning 49–139 (LLITKKNGRC…VYRDFRNASD (91 aa)) is the ATP-cone domain.

This sequence belongs to the NrdR family. Requires Zn(2+) as cofactor.

Negatively regulates transcription of bacterial ribonucleotide reductase nrd genes and operons by binding to NrdR-boxes. This chain is Transcriptional repressor NrdR, found in Bartonella tribocorum (strain CIP 105476 / IBS 506).